The following is a 594-amino-acid chain: Zinc finger protein 467 (594 aa).

Positions 1–70 (MRETLEALNS…HTEQAEAPCM (70 aa)) are disordered. Lys-97 is covalently cross-linked (Glycyl lysine isopeptide (Lys-Gly) (interchain with G-Cter in SUMO2)). 12 C2H2-type zinc fingers span residues 160–182 (YGCE…QRLH), 188–210 (CACP…QRSH), 216–238 (FPCS…LRTH), 244–266 (YPCA…QKTH), 272–294 (FPCT…QRIH), 300–322 (YQCT…QRVH), 355–377 (FACS…QSLH), 430–452 (FFCP…RRVH), 458–480 (FACA…SRAH), 486–508 (FACA…QAVH), 514–536 (HACA…QAIH), and 542–564 (FSCP…QRIH). The disordered stretch occupies residues 313-350 (QHLVRHQRVHDAASRTRSSPDIPATPHPPTASLAPSPT). A Glycyl lysine isopeptide (Lys-Gly) (interchain with G-Cter in SUMO2) cross-link involves residue Lys-368.

The protein belongs to the krueppel C2H2-type zinc-finger protein family. In terms of assembly, interacts with STAT3. Enhances STAT3 activity by keeping it in the nucleus.

The protein localises to the nucleus. Functionally, transcription factor that promotes adipocyte differentiation and suppresses osteoblast differentiation in the bone marrow. Enhances the osteoclast-supporting ability of stromal cells. Binds with STAT3 the consensus sequence 5'-CTTCTGGGAAGA-3' of the acute phase response element (APRE). Transactivates several promoters including FOS, OSM and PPARG. Recruits a histone deacetylase complex. In Rattus norvegicus (Rat), this protein is Zinc finger protein 467 (Znf467).